A 323-amino-acid polypeptide reads, in one-letter code: Acetyl-coenzyme A carboxylase carboxyl transferase subunit alpha (323 aa).

One can recognise a CoA carboxyltransferase C-terminal domain in the interval 35-296 (EVLSELDELR…GMTLKKCLDE (262 aa)).

This sequence belongs to the AccA family. As to quaternary structure, acetyl-CoA carboxylase is a heterohexamer composed of biotin carboxyl carrier protein (AccB), biotin carboxylase (AccC) and two subunits each of ACCase subunit alpha (AccA) and ACCase subunit beta (AccD).

It localises to the cytoplasm. It catalyses the reaction N(6)-carboxybiotinyl-L-lysyl-[protein] + acetyl-CoA = N(6)-biotinyl-L-lysyl-[protein] + malonyl-CoA. It participates in lipid metabolism; malonyl-CoA biosynthesis; malonyl-CoA from acetyl-CoA: step 1/1. Functionally, component of the acetyl coenzyme A carboxylase (ACC) complex. First, biotin carboxylase catalyzes the carboxylation of biotin on its carrier protein (BCCP) and then the CO(2) group is transferred by the carboxyltransferase to acetyl-CoA to form malonyl-CoA. This Aquifex aeolicus (strain VF5) protein is Acetyl-coenzyme A carboxylase carboxyl transferase subunit alpha.